A 602-amino-acid polypeptide reads, in one-letter code: Bifunctional xylanase/deacetylase (602 aa).

The N-terminal stretch at 1–14 (MSATLLVPSMTVKA) is a signal peptide. In terms of domain architecture, GH11 spans 17–211 (TIYNNKTGNQ…SSGSASVYKN (195 aa)). The active-site Nucleophile is the Glu108. Glu198 serves as the catalytic Proton donor. The segment at 216 to 240 (GGSSSSSGNQGGNQGGNTGNENAGN) is disordered. The segment covering 224–233 (NQGGNQGGNT) has biased composition (gly residues). In terms of domain architecture, CBM6 spans 249–366 (DKIQCETMTK…DAYLDYFNNS (118 aa)). In terms of domain architecture, NodB homology spans 402 to 578 (KLIALTFDDG…GLKNQGYTFV (177 aa)).

The protein belongs to the glycosyl hydrolase 11 (cellulase G) family. In terms of processing, in the later growth phases, seems to undergo a proteolytic cleavage into a 30 kDa protein possessing xylanolytic activity.

It is found in the secreted. It catalyses the reaction Endohydrolysis of (1-&gt;4)-beta-D-xylosidic linkages in xylans.. It participates in glycan degradation; xylan degradation. Its function is as follows. Endo-acting xylanase which specifically cleaves internal linkages on the xylan backbone, releasing xylooligosaccharides. Is also probably able, via its C-terminal domain, to remove acetyl groups from acetylated xylan, and thus it is probably capable of hydrolyzing acetylated xylan. This Pseudobutyrivibrio xylanivorans protein is Bifunctional xylanase/deacetylase (xyn11A).